A 367-amino-acid chain; its full sequence is MAMKVKDIVFMNKGDGENSYVKSAGLTLKVIAKTQPIVQKAVQSLFTGTHSTPLQVVNVADLGCALGPQPLESMSIVIESIVEKCGELGCEMPEIQFHLNDLAGNDFNTLFKGLSVVQEKYKNVSWFAMGAPGSFHGRLFPRNSMHLVHSCYSVHWLSKAPKITSEAGLPLNKGKIYMSKTSPPAVREGYLSQFEEDFSSVLRFRSPELAPDGRMVLILNGRQSADPTEKDICYLWDLLAEALSYLVSEGLIDEEKLDSFNVPYYNPSQEEVERVIDKEGSFTTEFSDTVVLEIGGKNAWSDPGLRIKGYRCFSEPILSHQFGEEVMDKLFDKAEEILAEDYKQGKEATKNISIVVVLKKKTNQTWT.

S-adenosyl-L-homocysteine is bound at residue Tyr20. Thr27 contributes to the theobromine binding site. Residues Cys64, Gln69, Asp101, Leu102, Ser134, and Phe135 each coordinate S-adenosyl-L-homocysteine. Tyr152, His155, and Trp156 together coordinate theobromine. Residues Asn172, Asp258, Phe260, and Asn261 each contribute to the Mg(2+) site. Phe313 lines the theobromine pocket.

This sequence belongs to the methyltransferase superfamily. Type-7 methyltransferase family. Mg(2+) is required as a cofactor.

The enzyme catalyses 7-methylxanthine + S-adenosyl-L-methionine = theobromine + S-adenosyl-L-homocysteine + H(+). It participates in alkaloid biosynthesis. Its function is as follows. Involved in the biosynthesis of theobromine. In Theobroma cacao (Cacao), this protein is Probable 7-methylxanthine methyltransferase 2.